The chain runs to 314 residues: MANLKRIRDRIKAVKNTRKITEAMRLVAAARVRRAQEQVMATRPFADRLAQVFYRLQTRLRLEDVDLPLLKQRPIETVGLLVVAGDRGLCGAYNANVIKRTEERVRELQETGQQVRLYLVGRKAVQYFQRRSAPIAKTYVNLSQIPTAAEAAQIGDELLSAFLSEKVDKVELIYTRFVSLISSRPVVQSLLPLDPTRLAARDDEIFNLLVRGGEFTVERSKIVAAVSAPPPDMIFEQDPVQILDALLPLYLNNQLLRALQEAAASELAARMTAMSNASDNATELIRTLGLAYNKARQAAITQEILEVVAGAEAL.

It belongs to the ATPase gamma chain family. In terms of assembly, F-type ATPases have 2 components, CF(1) - the catalytic core - and CF(0) - the membrane proton channel. CF(1) has five subunits: alpha(3), beta(3), gamma(1), delta(1), epsilon(1). CF(0) has three main subunits: a, b and c.

It localises to the cellular thylakoid membrane. In terms of biological role, produces ATP from ADP in the presence of a proton gradient across the membrane. The gamma chain is believed to be important in regulating ATPase activity and the flow of protons through the CF(0) complex. This chain is ATP synthase gamma chain, found in Synechococcus sp. (strain JA-3-3Ab) (Cyanobacteria bacterium Yellowstone A-Prime).